Consider the following 1248-residue polypeptide: Probable serine/threonine-protein kinase DDB_G0278509 (1248 aa).

Disordered stretches follow at residues M1–Y26, S40–Y61, Q100–E125, Q180–N220, and S235–K338. The span at Y102–Q117 shows a compositional bias: polar residues. A compositionally biased stretch (low complexity) spans N181–N216. LRR repeat units follow at residues S386–E407, G411–N432, N435–K457, H458–S480, F481–Y502, N503–P524, Q527–T548, N572–L593, K595–S616, R619–S641, S642–L663, N665–T687, and K688–K708. Positions Y825–S873 are disordered. Basic and acidic residues predominate over residues S845–D858. The span at T860–S873 shows a compositional bias: low complexity. Residues I946–M1239 form the Protein kinase domain. Residues I952–V960 and K973 each bind ATP. D1069 (proton acceptor) is an active-site residue. Positions N1106 to T1135 are disordered.

The protein belongs to the protein kinase superfamily. TKL Ser/Thr protein kinase family.

The catalysed reaction is L-seryl-[protein] + ATP = O-phospho-L-seryl-[protein] + ADP + H(+). The enzyme catalyses L-threonyl-[protein] + ATP = O-phospho-L-threonyl-[protein] + ADP + H(+). This chain is Probable serine/threonine-protein kinase DDB_G0278509, found in Dictyostelium discoideum (Social amoeba).